A 190-amino-acid chain; its full sequence is 3-isopropylmalate dehydratase small subunit (190 aa).

This sequence belongs to the LeuD family. LeuD type 1 subfamily. Heterodimer of LeuC and LeuD.

It catalyses the reaction (2R,3S)-3-isopropylmalate = (2S)-2-isopropylmalate. It functions in the pathway amino-acid biosynthesis; L-leucine biosynthesis; L-leucine from 3-methyl-2-oxobutanoate: step 2/4. Catalyzes the isomerization between 2-isopropylmalate and 3-isopropylmalate, via the formation of 2-isopropylmaleate. In Staphylococcus aureus (strain USA300), this protein is 3-isopropylmalate dehydratase small subunit.